The primary structure comprises 440 residues: 3-phosphoshikimate 1-carboxyvinyltransferase (440 aa).

Residues K19, S20, and R24 each coordinate 3-phosphoshikimate. K19 lines the phosphoenolpyruvate pocket. Phosphoenolpyruvate-binding residues include G92 and R121. 3-phosphoshikimate contacts are provided by S166, Q168, D315, and K342. Position 168 (Q168) interacts with phosphoenolpyruvate. D315 acts as the Proton acceptor in catalysis. R346 and R399 together coordinate phosphoenolpyruvate.

This sequence belongs to the EPSP synthase family. Monomer.

It is found in the cytoplasm. It carries out the reaction 3-phosphoshikimate + phosphoenolpyruvate = 5-O-(1-carboxyvinyl)-3-phosphoshikimate + phosphate. It functions in the pathway metabolic intermediate biosynthesis; chorismate biosynthesis; chorismate from D-erythrose 4-phosphate and phosphoenolpyruvate: step 6/7. Functionally, catalyzes the transfer of the enolpyruvyl moiety of phosphoenolpyruvate (PEP) to the 5-hydroxyl of shikimate-3-phosphate (S3P) to produce enolpyruvyl shikimate-3-phosphate and inorganic phosphate. The sequence is that of 3-phosphoshikimate 1-carboxyvinyltransferase from Leptospira interrogans serogroup Icterohaemorrhagiae serovar Lai (strain 56601).